Reading from the N-terminus, the 262-residue chain is MSDILNKIVATKHEEIAAARAHRGLVSLRDEAEARTDVRGFEAAMRAKIAAGQAAVIAEVKKASPSKGVLREDFRPAEIAASYERHGAACLSVLTDALYFQGCADYLRQARAACALPVLRKDFMVDEYQVHEARAMGADAILLIAACLDDAQMADLEAVALAHRMSVLVEVHDRDELQRALRLKTPLLGINNRNLRTFEVTLDTTLGMLGEVPSDRLLVTESGILGRDDVQRMRAAQVHAFLVGEAFMRASDPGVALAALFA.

The protein belongs to the TrpC family.

It carries out the reaction 1-(2-carboxyphenylamino)-1-deoxy-D-ribulose 5-phosphate + H(+) = (1S,2R)-1-C-(indol-3-yl)glycerol 3-phosphate + CO2 + H2O. It functions in the pathway amino-acid biosynthesis; L-tryptophan biosynthesis; L-tryptophan from chorismate: step 4/5. This is Indole-3-glycerol phosphate synthase from Leptothrix cholodnii (strain ATCC 51168 / LMG 8142 / SP-6) (Leptothrix discophora (strain SP-6)).